The following is a 532-amino-acid chain: Tyrosine-protein kinase Src-1 (532 aa).

The interval 1–52 (MGATKSKPREGGPRSRSLDIVEGSHQPFTSLSASQTPNKSLDSHRPPAQPFG) is disordered. G2 carries the N-myristoyl glycine lipid modification. The segment covering 7-19 (KPREGGPRSRSLD) has biased composition (basic and acidic residues). Polar residues predominate over residues 26–40 (QPFTSLSASQTPNKS). One can recognise an SH3 domain in the interval 80-141 (GGVTTFVALY…PSNYVAPSDS (62 aa)). One can recognise an SH2 domain in the interval 147–244 (WYLGKITRRE…GLCHRLTTVC (98 aa)). In terms of domain architecture, Protein kinase spans 266–519 (LRLELKLGQG…YLQAFLEDYF (254 aa)). ATP contacts are provided by residues 272 to 280 (LGQGCFGEV) and K294. D385 serves as the catalytic Proton acceptor. Y415 carries the phosphotyrosine; by autocatalysis modification.

It belongs to the protein kinase superfamily. Tyr protein kinase family. SRC subfamily.

The protein localises to the cell membrane. The enzyme catalyses L-tyrosyl-[protein] + ATP = O-phospho-L-tyrosyl-[protein] + ADP + H(+). This is Tyrosine-protein kinase Src-1 (src-a) from Xenopus laevis (African clawed frog).